Reading from the N-terminus, the 337-residue chain is Integrase/recombinase (337 aa).

In terms of domain architecture, Core-binding (CB) spans V14–L94. A Tyr recombinase domain is found at R112–D328. Catalysis depends on residues R146, K171, H277, R280, and H303. The active-site O-(3'-phospho-DNA)-tyrosine intermediate is the Y312.

It belongs to the 'phage' integrase family.

In terms of biological role, putative integrase believed to be involved in the insertion of antibiotic resistance genes into plasmids and transposons. The sequence is that of Integrase/recombinase (int) from Escherichia coli.